Here is an 88-residue protein sequence, read N- to C-terminus: Small ribosomal subunit protein uS17 (88 aa).

Belongs to the universal ribosomal protein uS17 family. In terms of assembly, part of the 30S ribosomal subunit.

Functionally, one of the primary rRNA binding proteins, it binds specifically to the 5'-end of 16S ribosomal RNA. The chain is Small ribosomal subunit protein uS17 from Pseudomonas fluorescens (strain SBW25).